The following is a 218-amino-acid chain: Octanoyltransferase (218 aa).

Positions E31–Q206 constitute a BPL/LPL catalytic domain. Substrate is bound by residues R70 to H77, S137 to G139, and G150 to A152. The active-site Acyl-thioester intermediate is the C168.

It belongs to the LipB family.

Its subcellular location is the cytoplasm. It carries out the reaction octanoyl-[ACP] + L-lysyl-[protein] = N(6)-octanoyl-L-lysyl-[protein] + holo-[ACP] + H(+). It functions in the pathway protein modification; protein lipoylation via endogenous pathway; protein N(6)-(lipoyl)lysine from octanoyl-[acyl-carrier-protein]: step 1/2. Catalyzes the transfer of endogenously produced octanoic acid from octanoyl-acyl-carrier-protein onto the lipoyl domains of lipoate-dependent enzymes. Lipoyl-ACP can also act as a substrate although octanoyl-ACP is likely to be the physiological substrate. The polypeptide is Octanoyltransferase (Vibrio vulnificus (strain CMCP6)).